The primary structure comprises 368 residues: Methionine import ATP-binding protein MetN (368 aa).

The 256-residue stretch at 5-260 (IELNNLSVQF…PKEALTKQFI (256 aa)) folds into the ABC transporter domain. Residue 41 to 48 (GYSGAGKS) coordinates ATP.

It belongs to the ABC transporter superfamily. Methionine importer (TC 3.A.1.24) family. In terms of assembly, the complex is composed of two ATP-binding proteins (MetN), two transmembrane proteins (MetI) and a solute-binding protein (MetQ).

It is found in the cell membrane. The catalysed reaction is L-methionine(out) + ATP + H2O = L-methionine(in) + ADP + phosphate + H(+). It carries out the reaction D-methionine(out) + ATP + H2O = D-methionine(in) + ADP + phosphate + H(+). Part of the ABC transporter complex MetNIQ involved in methionine import. Responsible for energy coupling to the transport system. The polypeptide is Methionine import ATP-binding protein MetN (Lactococcus lactis subsp. cremoris (strain MG1363)).